The chain runs to 1132 residues: Ubiquitin-associated protein 2 (1132 aa).

A disordered region spans residues 1–29; sequence MMTSVSNDRCRGAREKPQMPTAHAAQSQK. Residues 8–17 show a composition bias toward basic and acidic residues; the sequence is DRCRGAREKP. A UBA domain is found at 48–92; it reads KNDSDFEAKVKQLMEVTGKNQDECIVALHDCNGDVNKAINILLEG. 10 disordered regions span residues 95-202, 221-248, 331-351, 380-479, 602-679, 713-749, 875-919, 996-1033, 1040-1059, and 1087-1132; these read DTTS…YSES, GTDE…YGLK, NNQM…SPQS, LKPP…STVS, TSSA…VSTL, PLSQ…VEST, PYSG…LNPG, GGYG…GSVY, DKQG…SALG, and PHSQ…YWTN. The span at 109 to 130 shows a compositional bias: basic and acidic residues; it reads FGRESSENKENREKRTEREASR. Omega-N-methylarginine is present on arginine 166. The span at 168–182 shows a compositional bias: basic residues; it reads KRARGRGFGRGRGRG. 2 stretches are compositionally biased toward polar residues: residues 233–244 and 331–340; these read HSMSQEPPSKSS and NNQMAPGTAN. Positions 341–351 are enriched in low complexity; the sequence is STSASSYSPQS. Positions 392 to 404 are enriched in polar residues; the sequence is SSAQQNDTASPPA. A phosphoserine mark is found at serine 433 and serine 440. Composition is skewed to low complexity over residues 436–448 and 602–618; these read LSQL…HQTQ and TSSA…SSSY. Residues 619-630 are compositionally biased toward polar residues; sequence DQSSVHTRIAYQ. The residue at position 631 (serine 631) is a Phosphoserine. Low complexity predominate over residues 631-644; sequence SSASPPDSAPGSVA. Residues 652-662 show a composition bias toward polar residues; that stretch reads SQHTVDTTSSV. The segment covering 713-722 has biased composition (low complexity); that stretch reads PLSQLSSSLS. Over residues 723-742 the composition is skewed to polar residues; the sequence is GHQNSMTSAHATRSTSTPHT. The span at 897–914 shows a compositional bias: low complexity; the sequence is PAQAQQSQSQTHHTAQQP. Low complexity predominate over residues 1101 to 1115; that stretch reads PSGSGQRSQPSSLQP. The segment covering 1116-1132 has biased composition (polar residues); that stretch reads KSQASKPTYGSAPYWTN.

May interact with ANXA2.

The protein resides in the nucleus. It is found in the chromosome. Its subcellular location is the cytoplasm. Recruits the ubiquitination machinery to RNA polymerase II for polyubiquitination, removal and degradation, when the transcription-coupled nucleotide excision repair (TC-NER) machinery fails to resolve DNA damage. May promote the degradation of ANXA2. This Mus musculus (Mouse) protein is Ubiquitin-associated protein 2.